Reading from the N-terminus, the 336-residue chain is Probable carboxylesterase 6 (336 aa).

Residues 1–20 (MGGTKLTHVTTTNPNNSNIH) are disordered. Over residues 7-19 (THVTTTNPNNSNI) the composition is skewed to polar residues. The Involved in the stabilization of the negatively charged intermediate by the formation of the oxyanion hole motif lies at 96–98 (HGG). Residues Ser176, Asp276, and His303 contribute to the active site.

Belongs to the 'GDXG' lipolytic enzyme family. Expressed in roots, leaves, flowers and siliques.

The catalysed reaction is a carboxylic ester + H2O = an alcohol + a carboxylate + H(+). Carboxylesterase acting on esters with varying acyl chain length. The protein is Probable carboxylesterase 6 (CXE6) of Arabidopsis thaliana (Mouse-ear cress).